The following is a 143-amino-acid chain: Fluoride-specific ion channel FluC 1 (143 aa).

4 helical membrane-spanning segments follow: residues 13–33 (VLVG…SVIA), 42–62 (GVPW…ATLL), 80–100 (LCIG…TVEA), and 111–131 (WGIA…WVVI). The Na(+) site is built by G88 and T91.

It belongs to the fluoride channel Fluc/FEX (TC 1.A.43) family.

It is found in the cell membrane. The catalysed reaction is fluoride(in) = fluoride(out). Na(+) is not transported, but it plays an essential structural role and its presence is essential for fluoride channel function. Fluoride-specific ion channel. Important for reducing fluoride concentration in the cell, thus reducing its toxicity. The sequence is that of Fluoride-specific ion channel FluC 1 from Cutibacterium acnes (strain DSM 16379 / KPA171202) (Propionibacterium acnes).